Here is a 380-residue protein sequence, read N- to C-terminus: Queuine tRNA-ribosyltransferase (380 aa).

Catalysis depends on Asp-95, which acts as the Proton acceptor. Substrate contacts are provided by residues 95 to 99 (DSGGF), Asp-149, Gln-192, and Gly-219. The tract at residues 250–256 (GVGSPDS) is RNA binding. Asp-269 serves as the catalytic Nucleophile. Residues 274 to 278 (TRIGR) are RNA binding; important for wobble base 34 recognition. Positions 307, 309, 312, and 338 each coordinate Zn(2+).

Belongs to the queuine tRNA-ribosyltransferase family. As to quaternary structure, homodimer. Within each dimer, one monomer is responsible for RNA recognition and catalysis, while the other monomer binds to the replacement base PreQ1. Requires Zn(2+) as cofactor.

The enzyme catalyses 7-aminomethyl-7-carbaguanine + guanosine(34) in tRNA = 7-aminomethyl-7-carbaguanosine(34) in tRNA + guanine. It participates in tRNA modification; tRNA-queuosine biosynthesis. Functionally, catalyzes the base-exchange of a guanine (G) residue with the queuine precursor 7-aminomethyl-7-deazaguanine (PreQ1) at position 34 (anticodon wobble position) in tRNAs with GU(N) anticodons (tRNA-Asp, -Asn, -His and -Tyr). Catalysis occurs through a double-displacement mechanism. The nucleophile active site attacks the C1' of nucleotide 34 to detach the guanine base from the RNA, forming a covalent enzyme-RNA intermediate. The proton acceptor active site deprotonates the incoming PreQ1, allowing a nucleophilic attack on the C1' of the ribose to form the product. After dissociation, two additional enzymatic reactions on the tRNA convert PreQ1 to queuine (Q), resulting in the hypermodified nucleoside queuosine (7-(((4,5-cis-dihydroxy-2-cyclopenten-1-yl)amino)methyl)-7-deazaguanosine). This Geobacillus thermodenitrificans (strain NG80-2) protein is Queuine tRNA-ribosyltransferase.